Consider the following 196-residue polypeptide: Transmembrane protein 52 (196 aa).

An N-terminal signal peptide occupies residues 1–28; that stretch reads MAPGPSATQGILLLLPLLPLSQVTLGSA. A helical transmembrane segment spans residues 47 to 67; it reads LWHVGLILLAILLMLLCGVTA. A disordered region spans residues 162–196; sequence EEVAAPSEKTNSLPEALEPETTGGPQEPGPSAQRP.

The protein resides in the membrane. In Mus musculus (Mouse), this protein is Transmembrane protein 52 (Tmem52).